Here is a 492-residue protein sequence, read N- to C-terminus: 5-taurinomethyluridine-[tRNA] synthase subunit GTPB3, mitochondrial (492 aa).

The N-terminal 20 residues, 1–20 (MWRGLWTLAAQAARGPRRLC), are a transit peptide targeting the mitochondrion. The 5,10-methylenetetrahydrofolate site is built by arginine 52, glutamate 112, and lysine 152. Residues 249-416 (GVHVVVTGPP…LLEALRKELA (168 aa)) form the TrmE-type G domain. Residues 256–263 (GPPNAGKS), 282–286 (GTTRD), 303–306 (DTAG), 374–377 (NKSD), and 397–399 (SCL) contribute to the GTP site. Asparagine 259 contributes to the K(+) binding site. 2 residues coordinate Mg(2+): serine 263 and threonine 284. 5,10-methylenetetrahydrofolate is bound at residue lysine 492.

The protein belongs to the TRAFAC class TrmE-Era-EngA-EngB-Septin-like GTPase superfamily. TrmE GTPase family. As to quaternary structure, homodimer; forms a dimer in the presence of potassium. Interacts with MTO1; forms the GTPBP3-MTO1 complex composed of homodimers of GTPBP3 and MTO1. Homodimer, forms homodimer in vivo. Requires K(+) as cofactor. As to expression, ubiquitously expressed.

The protein resides in the mitochondrion. The protein localises to the cytoplasm. It catalyses the reaction GTP + H2O = GDP + phosphate + H(+). Functionally, GTPase component of the GTPBP3-MTO1 complex that catalyzes the 5-taurinomethyluridine (taum(5)U) modification at the 34th wobble position (U34) of mitochondrial tRNAs (mt-tRNAs), which plays a role in mt-tRNA decoding and mitochondrial translation. Taum(5)U formation on mammalian mt-tRNA requires the presence of both GTPBP3-mediated GTPase activity and MTO1 catalytic activity. The polypeptide is 5-taurinomethyluridine-[tRNA] synthase subunit GTPB3, mitochondrial (Homo sapiens (Human)).